A 225-amino-acid polypeptide reads, in one-letter code: Biosynthetic peptidoglycan transglycosylase (225 aa).

The helical transmembrane segment at 7–27 (SFLFKMVLILLIAPIVLVGVV) threads the bilayer.

It belongs to the glycosyltransferase 51 family.

Its subcellular location is the cell inner membrane. The catalysed reaction is [GlcNAc-(1-&gt;4)-Mur2Ac(oyl-L-Ala-gamma-D-Glu-L-Lys-D-Ala-D-Ala)](n)-di-trans,octa-cis-undecaprenyl diphosphate + beta-D-GlcNAc-(1-&gt;4)-Mur2Ac(oyl-L-Ala-gamma-D-Glu-L-Lys-D-Ala-D-Ala)-di-trans,octa-cis-undecaprenyl diphosphate = [GlcNAc-(1-&gt;4)-Mur2Ac(oyl-L-Ala-gamma-D-Glu-L-Lys-D-Ala-D-Ala)](n+1)-di-trans,octa-cis-undecaprenyl diphosphate + di-trans,octa-cis-undecaprenyl diphosphate + H(+). It functions in the pathway cell wall biogenesis; peptidoglycan biosynthesis. Its function is as follows. Peptidoglycan polymerase that catalyzes glycan chain elongation from lipid-linked precursors. The chain is Biosynthetic peptidoglycan transglycosylase from Vibrio parahaemolyticus serotype O3:K6 (strain RIMD 2210633).